We begin with the raw amino-acid sequence, 343 residues long: Cell cycle control protein 50C (343 aa).

The Cytoplasmic portion of the chain corresponds to 1-34 (MKRKCQDYESRLPDNTAVKQQQLPAFRLQLTASE). Residues 35 to 55 (ILSGFFAIGLFCLGMGIILLL) traverse the membrane as a helical segment. Topologically, residues 56–306 (SAKSIKEVEI…STLTWSGGSS (251 aa)) are extracellular. 4 N-linked (GlcNAc...) asparagine glycosylation sites follow: Asn66, Asn164, Asn205, and Asn265. The helical transmembrane segment at 307 to 327 (LFLALAYLVTGAVTLLASFSM) threads the bilayer. The Cytoplasmic segment spans residues 328–343 (MALHLKLKERKTFFLQ).

It belongs to the CDC50/LEM3 family.

Its subcellular location is the membrane. This is Cell cycle control protein 50C (TMEM30C) from Bos taurus (Bovine).